The primary structure comprises 63 residues: Large ribosomal subunit protein eL24 (63 aa).

Residues cysteine 7, cysteine 10, cysteine 33, and cysteine 37 each coordinate Zn(2+). A C4-type zinc finger spans residues 7–37 (CSFCGGSIEPGTGLMYVLRNGQILWFCSSKC).

This sequence belongs to the eukaryotic ribosomal protein eL24 family. In terms of assembly, part of the 50S ribosomal subunit. Forms a cluster with proteins L3 and L14. It depends on Zn(2+) as a cofactor.

Binds to the 23S rRNA. The protein is Large ribosomal subunit protein eL24 of Aeropyrum pernix (strain ATCC 700893 / DSM 11879 / JCM 9820 / NBRC 100138 / K1).